The primary structure comprises 335 residues: Fructose-1,6-bisphosphatase class 1 1 (335 aa).

Positions 92, 114, 116, and 117 each coordinate Mg(2+). Substrate is bound by residues 117-120, N209, and K275; that span reads DGSS. Residue E281 coordinates Mg(2+).

It belongs to the FBPase class 1 family. Homotetramer. Requires Mg(2+) as cofactor.

The protein localises to the cytoplasm. The catalysed reaction is beta-D-fructose 1,6-bisphosphate + H2O = beta-D-fructose 6-phosphate + phosphate. Its pathway is carbohydrate biosynthesis; gluconeogenesis. The polypeptide is Fructose-1,6-bisphosphatase class 1 1 (Polaromonas naphthalenivorans (strain CJ2)).